The sequence spans 140 residues: Ubiquitin-like protein ATG12 (140 aa).

Residues 1–50 (MAEEPQSVLQLPTSIAAGGEGLTDVSPETTTPEPPSSAAVSPGTEEPAGD) are disordered. Low complexity predominate over residues 25-42 (VSPETTTPEPPSSAAVSP). Gly140 is covalently cross-linked (Glycyl lysine isopeptide (Gly-Lys) (interchain with K-130 in ATG5)).

Belongs to the ATG12 family. As to quaternary structure, forms a conjugate with ATG5. Part of the minor complex composed of 4 sets of ATG12-ATG5 and ATG16L1 (400 kDa); this complex interacts with ATG3 leading to disruption of ATG7 interaction and promotion of ATG8-like proteins lipidation. Forms an 800-kDa complex composed of ATG12-ATG5 and ATG16L2. Interacts with DHX58/RIG-1, IFIH1/MDA5 and MAVS/IPS-1 in monomeric form as well as in ATG12-ATG5 conjugate. The interaction with MAVS is further enhanced upon vesicular stomatitis virus (VSV) infection. Interacts with ATG3; this interaction is essential for phosphatidylethanolamine (PE)-conjugated ATG8-like proteins formation. Interacts with ATG7. Interacts with ATG10. The ATG12-ATG5 conjugate interacts with RAB33A; this interaction is bridged by ATG16L1 and promotes ATG12-ATG5-ATG16L1 complex recruitment to phagophores. Interacts with TECPR1. Interacts with SH3BGRL. The ATG12-ATG5 conjugate interacts with PDCD6IP (via the BRO1 domain); this interaction is bridged by ATG12 and promotes multiple PDCD6IP-mediated functions such as endolysosomal trafficking, macroautophagy and exosome biogenesis. Post-translationally, acetylated by EP300. As to expression, ubiquitous.

The protein resides in the cytoplasm. It localises to the preautophagosomal structure membrane. In terms of biological role, ubiquitin-like protein involved in autophagy vesicles formation. Conjugation with ATG5 through a ubiquitin-like conjugating system involving also ATG7 as an E1-like activating enzyme and ATG10 as an E2-like conjugating enzyme, is essential for its function. The ATG12-ATG5 conjugate acts as an E3-like enzyme which is required for lipidation of ATG8 family proteins and their association to the vesicle membranes. As part of the ATG8 conjugation system with ATG5 and ATG16L1, required for recruitment of LRRK2 to stressed lysosomes and induction of LRRK2 kinase activity in response to lysosomal stress. (Microbial infection) May act as a proviral factor. In association with ATG5, negatively regulates the innate antiviral immune response by impairing the type I IFN production pathway upon vesicular stomatitis virus (VSV) infection. Required for the translation of incoming hepatitis C virus (HCV) RNA and, thereby, for the initiation of HCV replication, but not required once infection is established. In Homo sapiens (Human), this protein is Ubiquitin-like protein ATG12.